A 329-amino-acid polypeptide reads, in one-letter code: DNA-directed RNA polymerase subunit alpha (329 aa).

An alpha N-terminal domain (alpha-NTD) region spans residues Met-1–Arg-234. The segment at Phe-248–Leu-329 is alpha C-terminal domain (alpha-CTD).

The protein belongs to the RNA polymerase alpha chain family. As to quaternary structure, homodimer. The RNAP catalytic core consists of 2 alpha, 1 beta, 1 beta' and 1 omega subunit. When a sigma factor is associated with the core the holoenzyme is formed, which can initiate transcription.

It carries out the reaction RNA(n) + a ribonucleoside 5'-triphosphate = RNA(n+1) + diphosphate. Functionally, DNA-dependent RNA polymerase catalyzes the transcription of DNA into RNA using the four ribonucleoside triphosphates as substrates. The protein is DNA-directed RNA polymerase subunit alpha of Shewanella loihica (strain ATCC BAA-1088 / PV-4).